An 804-amino-acid chain; its full sequence is Leucine--tRNA ligase (804 aa).

The short motif at 40–51 (PYPSGAGLHVGH) is the 'HIGH' region element. The short motif at 576 to 580 (KMSKS) is the 'KMSKS' region element. Lys579 is an ATP binding site.

This sequence belongs to the class-I aminoacyl-tRNA synthetase family.

The protein localises to the cytoplasm. The enzyme catalyses tRNA(Leu) + L-leucine + ATP = L-leucyl-tRNA(Leu) + AMP + diphosphate. The chain is Leucine--tRNA ligase from Staphylococcus saprophyticus subsp. saprophyticus (strain ATCC 15305 / DSM 20229 / NCIMB 8711 / NCTC 7292 / S-41).